The primary structure comprises 468 residues: Tyrosine phenol-lyase (468 aa).

N6-(pyridoxal phosphate)lysine is present on Lys260.

Belongs to the beta-eliminating lyase family. As to quaternary structure, homotetramer. It depends on pyridoxal 5'-phosphate as a cofactor.

The enzyme catalyses L-tyrosine + H2O = phenol + pyruvate + NH4(+). This is Tyrosine phenol-lyase from Lacrimispora saccharolytica (strain ATCC 35040 / DSM 2544 / NRCC 2533 / WM1) (Clostridium saccharolyticum).